Reading from the N-terminus, the 238-residue chain is Sugar fermentation stimulation protein homolog (238 aa).

Belongs to the SfsA family.

The polypeptide is Sugar fermentation stimulation protein homolog (Brucella melitensis biotype 1 (strain ATCC 23456 / CCUG 17765 / NCTC 10094 / 16M)).